We begin with the raw amino-acid sequence, 3712 residues long: Laminin subunit alpha (3712 aa).

The N-terminal stretch at 1 to 22 (MGHGVASIGALLVILAISYCQA) is a signal peptide. One can recognise a Laminin N-terminal domain in the interval 23–272 (ELTPPYFNLA…SIKDISIGGR (250 aa)). N-linked (GlcNAc...) asparagine glycosylation is found at N116 and N219. Cystine bridges form between C273–C282, C275–C296, C298–C307, C310–C330, C333–C342, C335–C367, C370–C379, C382–C400, C403–C414, C405–C421, C423–C432, C435–C445, C448–C460, C450–C468, C470–C479, C482–C492, C495–C507, C497–C514, C516–C525, C528–C538, C541–C553, C543–C560, C562–C571, C574–C584, C587–C599, C589–C605, C607–C616, C619–C629, C632–C644, C634–C650, C652–C661, C664–C674, C677–C691, C679–C700, C702–C711, C714–C729, C732–C746, C734–C753, C755–C764, C767–C782, C785–C797, C787–C804, and C806–C815. 10 consecutive Laminin EGF-like domains span residues 273–332 (CMCN…NCEP), 333–402 (CNCH…VCSP), 403–447 (CQCD…NCRE), 448–494 (CECN…ECKA), 495–540 (CECN…TCSY), 541–586 (CDCD…DCKP), 587–631 (CNCS…DCLP), 632–676 (CHCD…SCED), 677–731 (CNCD…GCEI), and 732–784 (CDCW…GCKD). N395 is a glycosylation site (N-linked (GlcNAc...) asparagine). N-linked (GlcNAc...) asparagine glycosylation is present at N453. N-linked (GlcNAc...) asparagine glycosylation occurs at N508. N588 carries an N-linked (GlcNAc...) asparagine glycan. N-linked (GlcNAc...) asparagine glycosylation occurs at N722. The Laminin EGF-like 11; truncated domain occupies 785-815 (CSCDVGGSWQSVCDKISGQCKCHPRITGLAC). The interval 816–1374 (TQPLTTHFFP…TADYNSGALP (559 aa)) is domain IV''. N897 and N1352 each carry an N-linked (GlcNAc...) asparagine glycan. 16 disulfides stabilise this stretch: C1375–C1387, C1377–C1394, C1396–C1405, C1408–C1418, C1421–C1429, C1423–C1436, C1438–C1447, C1450–C1463, C1466–C1480, C1468–C1487, C1489–C1498, C1501–C1511, C1514–C1526, C1516–C1533, C1535–C1544, and C1547–C1562. 4 consecutive Laminin EGF-like domains span residues 1375-1420 (CNCD…DCKP), 1421-1465 (CKCP…GCEE), 1466-1513 (CACN…HCEQ), and 1514-1564 (CSCH…GCTT). N1484 carries N-linked (GlcNAc...) asparagine glycosylation. A Laminin EGF-like 16; first part domain is found at 1565-1574 (CFCFGKTSRC). N1583 and N1617 each carry an N-linked (GlcNAc...) asparagine glycan. The Laminin IV type A domain maps to 1585 to 1775 (SLLKHVSITT…GEYQFLAVER (191 aa)). Residues 1776-1808 (CSCPPGYSGHSCEDCAPGYYRDPSGPYGGYCIP) enclose the Laminin EGF-like 16; second part domain. Intrachain disulfides connect C1778-C1787, C1790-C1806, C1809-C1818, C1811-C1825, C1828-C1837, C1840-C1856, C1859-C1874, C1861-C1885, C1887-C1896, C1899-C1914, C1917-C1931, C1919-C1938, C1941-C1950, C1953-C1967, C1970-C1980, C1972-C1987, C1989-C1998, C2001-C2014, C2017-C2028, C2019-C2035, C2037-C2046, C2049-C2061, C2064-C2076, C2066-C2083, C2085-C2094, and C2097-C2109. Laminin EGF-like domains lie at 1809 to 1858 (CECN…DCMI), 1859 to 1916 (CACP…VCKP), 1917 to 1969 (CECS…NCQS), 1970 to 2016 (CDCD…GCRA), 2017 to 2063 (CDCG…GCTP), and 2064 to 2111 (CNCN…GCQE). The N-linked (GlcNAc...) asparagine glycan is linked to N1847. N1943 is a glycosylation site (N-linked (GlcNAc...) asparagine). Residue N2024 is glycosylated (N-linked (GlcNAc...) asparagine). The tract at residues 2112–2671 (CNNCHHALLD…EAARQLANSI (560 aa)) is domain II and I. Residues 2178 to 2249 (KKANSELESD…LSKNLEAAAS (72 aa)) adopt a coiled-coil conformation. N2196, N2215, N2267, N2301, and N2323 each carry an N-linked (GlcNAc...) asparagine glycan. Residues 2301-2321 (NKSLNALKNDIGEFSDHLEDL) are a coiled coil. A coiled-coil region spans residues 2376 to 2450 (DLTLNQINQK…QYTDMTASAE (75 aa)). N-linked (GlcNAc...) asparagine glycans are attached at residues N2482, N2524, N2538, N2569, N2699, N2720, N2890, N2938, and N3010. Positions 2541-2676 (EHQLKDINKL…LANSIKVGVN (136 aa)) form a coiled coil. Laminin G-like domains lie at 2672–2868 (KVGV…ERDV), 2876–3048 (VTGL…EEGC), and 3055–3223 (VVSY…INGC). C3022 and C3048 are joined by a disulfide. Residue N3070 is glycosylated (N-linked (GlcNAc...) asparagine). C3196 and C3223 are oxidised to a cystine. Positions 3244 to 3297 (NEVESPWSNADTLPPLKPDIESTLPPTTPTTTTTTTTTTTSTTTTSTTTTTTTP) are disordered. Positions 3265 to 3297 (STLPPTTPTTTTTTTTTTTSTTTTSTTTTTTTP) are enriched in low complexity. 2 consecutive Laminin G-like domains span residues 3349 to 3528 (GYRF…VVPC) and 3534 to 3709 (RGLF…QGYC). N3491 carries an N-linked (GlcNAc...) asparagine glycan. C3505 and C3528 are disulfide-bonded. N3612 carries N-linked (GlcNAc...) asparagine glycosylation. A disulfide bond links C3682 and C3709.

Laminin is a complex glycoprotein, consisting of three different polypeptide chains (alpha, beta, gamma), which are bound to each other by disulfide bonds into a cross-shaped molecule comprising one long and three short arms with globules at each end. As to expression, newly formed mesoderm and later prominently expressed in hemocytes, which also synthesize collagen IV. Expressed in muscles.

The protein localises to the secreted. It localises to the extracellular space. It is found in the extracellular matrix. Its subcellular location is the basement membrane. The protein resides in the synapse. The protein localises to the cell projection. It localises to the axon. It is found in the cytoplasmic vesicle. Its subcellular location is the secretory vesicle. The protein resides in the synaptic vesicle. Its function is as follows. Binding to cells via a high affinity receptor, laminin is thought to mediate the attachment, migration and organization of cells into tissues during embryonic development by interacting with other extracellular matrix components. Activates presynaptic signaling involving integrin alpha-PS3/beta-nu and Fak to suppress neuromuscular junction (NMJ) growth during larval development and during low crawling activity, but not during higher-crawling conditions. Mediates, together with integrin alpha-PS3/beta-nu, glutamate receptor-modulated NMJ growth. The sequence is that of Laminin subunit alpha (LanA) from Drosophila melanogaster (Fruit fly).